Reading from the N-terminus, the 500-residue chain is Endothelial lipase (500 aa).

A signal peptide spans 1 to 20 (MRNTVFLLGFWSVYCYFPAG). An intrachain disulfide couples Cys64 to Cys77. Asn65, Asn80, and Asn136 each carry an N-linked (GlcNAc...) asparagine glycan. Ser169 functions as the Nucleophile in the catalytic mechanism. Asp193 serves as the catalytic Charge relay system. Cys252 and Cys272 are disulfide-bonded. The active-site Charge relay system is the His274. 2 disulfide bridges follow: Cys297–Cys316 and Cys308–Cys311. Residue 325-337 (KMRKKRNSKMYLK) coordinates heparin. The PLAT domain maps to 347-482 (YHYQLKVHMF…SPGQELWFHK (136 aa)). N-linked (GlcNAc...) asparagine glycosylation is found at Asn359 and Asn393. A disulfide bond links Cys463 and Cys483. Asn491 is a glycosylation site (N-linked (GlcNAc...) asparagine).

Belongs to the AB hydrolase superfamily. Lipase family. As to quaternary structure, head to tail homodimer. In terms of tissue distribution, expressed in placenta, lung, liver, testis and spleen.

The protein localises to the secreted. The catalysed reaction is a triacylglycerol + H2O = a diacylglycerol + a fatty acid + H(+). It catalyses the reaction a 1,2-diacyl-sn-glycero-3-phosphocholine + H2O = a 2-acyl-sn-glycero-3-phosphocholine + a fatty acid + H(+). The enzyme catalyses 1,2,3-tri-(9Z-octadecenoyl)-glycerol + H2O = di-(9Z)-octadecenoylglycerol + (9Z)-octadecenoate + H(+). It carries out the reaction 1,2,3-tributanoylglycerol + H2O = dibutanoylglycerol + butanoate + H(+). The catalysed reaction is 1,2-dihexadecanoyl-sn-glycero-3-phosphocholine + H2O = hexadecanoyl-sn-glycero-3-phosphocholine + hexadecanoate + H(+). Its function is as follows. Exerts both phospholipase and triglyceride lipase activities. More active as a phospholipase than a triglyceride lipase. Hydrolyzes triglycerides, both with short-chain fatty acyl groups (tributyrin) and long-chain fatty acyl groups (triolein) with similar levels of activity toward both types of substrates. Hydrolyzes high density lipoproteins (HDL) more efficiently than other lipoproteins. The protein is Endothelial lipase (Lipg) of Mus musculus (Mouse).